We begin with the raw amino-acid sequence, 298 residues long: GTPase Era (298 aa).

The Era-type G domain maps to 4 to 171; the sequence is RAGFVALIGR…KEKIVSFLPE (168 aa). Residues 12-19 form a G1 region; the sequence is GRTNVGKS. 12-19 contacts GTP; that stretch reads GRTNVGKS. Positions 38-42 are G2; the sequence is QTTRN. Residues 59–62 are G3; it reads DTPG. Residues 59 to 63 and 121 to 124 each bind GTP; these read DTPGI and NKID. Residues 121 to 124 form a G4 region; sequence NKID. Residues 150–152 are G5; the sequence is ISA. Residues 202–280 enclose the KH type-2 domain; it reads LEEEVPHGVY…FLQLWVKVRK (79 aa).

Belongs to the TRAFAC class TrmE-Era-EngA-EngB-Septin-like GTPase superfamily. Era GTPase family. In terms of assembly, monomer.

It localises to the cytoplasm. The protein localises to the cell membrane. Functionally, an essential GTPase that binds both GDP and GTP, with rapid nucleotide exchange. Plays a role in 16S rRNA processing and 30S ribosomal subunit biogenesis and possibly also in cell cycle regulation and energy metabolism. The sequence is that of GTPase Era from Caldanaerobacter subterraneus subsp. tengcongensis (strain DSM 15242 / JCM 11007 / NBRC 100824 / MB4) (Thermoanaerobacter tengcongensis).